A 509-amino-acid polypeptide reads, in one-letter code: NADH-quinone oxidoreductase subunit M (509 aa).

The chain crosses the membrane as a helical span at residues 1 to 21; sequence MLLPWLILIPFIGGFLCWQTE. Over 22-29 the chain is Cytoplasmic; that stretch reads RFGVKVPR. A helical membrane pass occupies residues 30–50; it reads WIALITMGLTLALSLQLWLQG. The Periplasmic segment spans residues 51–82; the sequence is GYSLTQSAGIPQWQSEFDMPWIPRFGISIHLA. A helical membrane pass occupies residues 83-103; that stretch reads IDGLSLLMVVLTGLLGVLAVL. Residues 104 to 121 are Cytoplasmic-facing; it reads CSWKEIEKYQGFFHLNLM. The chain crosses the membrane as a helical span at residues 122-142; sequence WILGGVIGVFLAIDMFLFFFF. Residues 143–173 lie on the Periplasmic side of the membrane; the sequence is WEMMLVPMYFLIALWGHKASDGKTRITAATK. The chain crosses the membrane as a helical span at residues 174-194; it reads FFIYTQASGLVMLIAILALVF. At 195 to 221 the chain is on the cytoplasmic side; the sequence is VHYNATGVWTFNYEELLNTPMSSGVEY. The chain crosses the membrane as a helical span at residues 222–242; the sequence is LLMLGFFIAFAVKMPVVPLHG. Residues 243–258 are Periplasmic-facing; the sequence is WLPDAHSQAPTAGSVD. A helical transmembrane segment spans residues 259–279; it reads LAGILLKTAAYGLLRFSLPLF. Topologically, residues 280–285 are cytoplasmic; that stretch reads PNASAE. The chain crosses the membrane as a helical span at residues 286-306; that stretch reads FAPIAMWLGVIGIFYGAWMAF. Over 307 to 313 the chain is Periplasmic; the sequence is AQTDIKR. The helical transmembrane segment at 314-334 threads the bilayer; sequence LIAYTSVSHMGFVLIAIYTGS. Residues 335 to 339 are Cytoplasmic-facing; it reads QLAYQ. A helical membrane pass occupies residues 340 to 360; the sequence is GAVIQMIAHGLSAAGLFILCG. The Periplasmic segment spans residues 361–382; sequence QLYERIHTRDMRMMGGLWSKMK. 2 helical membrane passes run 383 to 403 and 404 to 424; these read WLPALSLFFAVATLGMPGTGN and FVGEFMILFGSFQVVPVITVI. Position 425 (Ser425) is a topological domain, periplasmic. The helical transmembrane segment at 426–446 threads the bilayer; the sequence is TFGLVFASVYSLAMLHRAYFG. The Cytoplasmic portion of the chain corresponds to 447-464; it reads KAKSQIASQELPGMSLRE. The chain crosses the membrane as a helical span at residues 465-485; that stretch reads LFMILLLVVLLVLLGFYPQPI. Over 486–509 the chain is Periplasmic; that stretch reads LDTSHSAIGNIQQWFVNSVTTTRP.

Belongs to the complex I subunit 4 family. Composed of 13 different subunits. Subunits NuoA, H, J, K, L, M, N constitute the membrane sector of the complex.

It is found in the cell inner membrane. It catalyses the reaction a quinone + NADH + 5 H(+)(in) = a quinol + NAD(+) + 4 H(+)(out). Its function is as follows. NDH-1 shuttles electrons from NADH, via FMN and iron-sulfur (Fe-S) centers, to quinones in the respiratory chain. The immediate electron acceptor for the enzyme in this species is believed to be ubiquinone. Couples the redox reaction to proton translocation (for every two electrons transferred, four hydrogen ions are translocated across the cytoplasmic membrane), and thus conserves the redox energy in a proton gradient. This is NADH-quinone oxidoreductase subunit M (nuoM) from Escherichia coli O157:H7.